The sequence spans 298 residues: Acetaldehyde dehydrogenase (298 aa).

Residue 6–9 participates in NAD(+) binding; the sequence is SGNI. The Acyl-thioester intermediate role is filled by cysteine 121. NAD(+)-binding positions include 152–160 and asparagine 271; that span reads SAGPGTRAN.

The protein belongs to the acetaldehyde dehydrogenase family.

It catalyses the reaction acetaldehyde + NAD(+) + CoA = acetyl-CoA + NADH + H(+). The sequence is that of Acetaldehyde dehydrogenase from Mycobacterium avium (strain 104).